A 422-amino-acid polypeptide reads, in one-letter code: Serine--tRNA ligase (422 aa).

Residues 1 to 20 form a disordered region; that stretch reads MHDLKSIRDNPDGFDAGLKR. Residue 229–231 participates in L-serine binding; the sequence is TAE. ATP is bound at residue 260-262; it reads RSE. Glu283 serves as a coordination point for L-serine. 347–350 contacts ATP; the sequence is EISS. Ser383 lines the L-serine pocket.

This sequence belongs to the class-II aminoacyl-tRNA synthetase family. Type-1 seryl-tRNA synthetase subfamily. As to quaternary structure, homodimer. The tRNA molecule binds across the dimer.

The protein localises to the cytoplasm. The enzyme catalyses tRNA(Ser) + L-serine + ATP = L-seryl-tRNA(Ser) + AMP + diphosphate + H(+). It carries out the reaction tRNA(Sec) + L-serine + ATP = L-seryl-tRNA(Sec) + AMP + diphosphate + H(+). It functions in the pathway aminoacyl-tRNA biosynthesis; selenocysteinyl-tRNA(Sec) biosynthesis; L-seryl-tRNA(Sec) from L-serine and tRNA(Sec): step 1/1. Catalyzes the attachment of serine to tRNA(Ser). Is also able to aminoacylate tRNA(Sec) with serine, to form the misacylated tRNA L-seryl-tRNA(Sec), which will be further converted into selenocysteinyl-tRNA(Sec). This Paramagnetospirillum magneticum (strain ATCC 700264 / AMB-1) (Magnetospirillum magneticum) protein is Serine--tRNA ligase.